The chain runs to 647 residues: Threonine--tRNA ligase (647 aa).

Residues 1–61 (MINITFPDGA…TEDGSIEIVT (61 aa)) form the TGS domain. Residues 242–540 (DHRKLGKELD…LIENYKGAFP (299 aa)) form a catalytic region. Positions 336, 387, and 517 each coordinate Zn(2+).

The protein belongs to the class-II aminoacyl-tRNA synthetase family. In terms of assembly, homodimer. The cofactor is Zn(2+).

The protein resides in the cytoplasm. It carries out the reaction tRNA(Thr) + L-threonine + ATP = L-threonyl-tRNA(Thr) + AMP + diphosphate + H(+). Functionally, catalyzes the attachment of threonine to tRNA(Thr) in a two-step reaction: L-threonine is first activated by ATP to form Thr-AMP and then transferred to the acceptor end of tRNA(Thr). Also edits incorrectly charged L-seryl-tRNA(Thr). The polypeptide is Threonine--tRNA ligase (Streptococcus pneumoniae serotype 4 (strain ATCC BAA-334 / TIGR4)).